Here is a 756-residue protein sequence, read N- to C-terminus: 5-methyltetrahydropteroyltriglutamate--homocysteine methyltransferase (756 aa).

5-methyltetrahydropteroyltri-L-glutamate-binding positions include 20 to 23 (RELK) and Lys-114. L-homocysteine is bound by residues 433-435 (IGS) and Glu-486. L-methionine is bound by residues 433–435 (IGS) and Glu-486. 5-methyltetrahydropteroyltri-L-glutamate is bound by residues 517 to 518 (RC) and Trp-563. Position 601 (Asp-601) interacts with L-homocysteine. Asp-601 provides a ligand contact to L-methionine. Glu-607 lines the 5-methyltetrahydropteroyltri-L-glutamate pocket. Residues His-643, Cys-645, and Glu-667 each coordinate Zn(2+). The active-site Proton donor is the His-696. Cys-728 is a Zn(2+) binding site.

Belongs to the vitamin-B12 independent methionine synthase family. Zn(2+) serves as cofactor.

The catalysed reaction is 5-methyltetrahydropteroyltri-L-glutamate + L-homocysteine = tetrahydropteroyltri-L-glutamate + L-methionine. It participates in amino-acid biosynthesis; L-methionine biosynthesis via de novo pathway; L-methionine from L-homocysteine (MetE route): step 1/1. Catalyzes the transfer of a methyl group from 5-methyltetrahydrofolate to homocysteine resulting in methionine formation. The polypeptide is 5-methyltetrahydropteroyltriglutamate--homocysteine methyltransferase (Mycolicibacterium paratuberculosis (strain ATCC BAA-968 / K-10) (Mycobacterium paratuberculosis)).